A 128-amino-acid chain; its full sequence is Azurin (128 aa).

The region spanning 1-128 (AECSVDIQGN…AMMKGTLTLK (128 aa)) is the Plastocyanin-like domain. Cu cation is bound by residues His46, Cys112, His117, and Met121.

It is found in the periplasm. Its function is as follows. Transfers electrons from cytochrome c551 to cytochrome oxidase. This chain is Azurin, found in Pseudomonas denitrificans.